Reading from the N-terminus, the 567-residue chain is Formate--tetrahydrofolate ligase (567 aa).

68 to 75 (TPLGEGKT) is an ATP binding site.

This sequence belongs to the formate--tetrahydrofolate ligase family.

The enzyme catalyses (6S)-5,6,7,8-tetrahydrofolate + formate + ATP = (6R)-10-formyltetrahydrofolate + ADP + phosphate. Its pathway is one-carbon metabolism; tetrahydrofolate interconversion. The polypeptide is Formate--tetrahydrofolate ligase (Desulforamulus reducens (strain ATCC BAA-1160 / DSM 100696 / MI-1) (Desulfotomaculum reducens)).